The sequence spans 490 residues: Cyclin-T1-3 (490 aa).

Disordered regions lie at residues arginine 275–alanine 391 and alanine 414–serine 490. 2 stretches are compositionally biased toward polar residues: residues glutamine 282–alanine 298 and threonine 352–methionine 365. Composition is skewed to basic and acidic residues over residues alanine 367–alanine 391 and glutamine 457–serine 490.

It belongs to the cyclin family. Cyclin T subfamily.

In Oryza sativa subsp. japonica (Rice), this protein is Cyclin-T1-3 (CYCT1-3).